Here is a 190-residue protein sequence, read N- to C-terminus: Probable nicotinate-nucleotide adenylyltransferase (190 aa).

This sequence belongs to the NadD family.

The enzyme catalyses nicotinate beta-D-ribonucleotide + ATP + H(+) = deamido-NAD(+) + diphosphate. The protein operates within cofactor biosynthesis; NAD(+) biosynthesis; deamido-NAD(+) from nicotinate D-ribonucleotide: step 1/1. Catalyzes the reversible adenylation of nicotinate mononucleotide (NaMN) to nicotinic acid adenine dinucleotide (NaAD). This is Probable nicotinate-nucleotide adenylyltransferase from Borrelia turicatae (strain 91E135).